The sequence spans 112 residues: Small ribosomal subunit protein bS6 (112 aa).

The protein belongs to the bacterial ribosomal protein bS6 family.

In terms of biological role, binds together with bS18 to 16S ribosomal RNA. The sequence is that of Small ribosomal subunit protein bS6 from Azobacteroides pseudotrichonymphae genomovar. CFP2.